Consider the following 106-residue polypeptide: Large ribosomal subunit protein P2 (106 aa).

The segment at 79 to 106 is disordered; that stretch reads GAGAVAEAKKEEPEEEEADDDMGFGLFD. A compositionally biased stretch (acidic residues) spans 91 to 100; it reads PEEEEADDDM.

Belongs to the eukaryotic ribosomal protein P1/P2 family. In terms of assembly, P1 and P2 exist as dimers at the large ribosomal subunit. Phosphorylated.

Plays an important role in the elongation step of protein synthesis. This Leishmania infantum protein is Large ribosomal subunit protein P2 (LIP).